The following is a 290-amino-acid chain: Endonuclease 2 (290 aa).

Residues 1-27 (MANQKGLHVVMMIITVWLLYAAPNIHG) form the signal peptide. Residues Trp28 and His33 each coordinate a divalent metal cation. 28 to 33 (WGKEGH) lines the substrate pocket. Cys37 and Cys68 are joined by a disulfide. 2 residues coordinate a divalent metal cation: Asp72 and His85. Residues 72-76 (DRVKF), 85-88 (HYIN), and 94-99 (SYQYNR) each bind substrate. Intrachain disulfides connect Cys93/Cys245, Cys101/Cys111, and Cys226/Cys232. Asn118 and Tyr136 together coordinate substrate. A glycan (N-linked (GlcNAc...) asparagine) is linked at Asn118. The N-linked (GlcNAc...) asparagine glycan is linked to Asn137. Residues His147, Asp151, His157, His181, and Asp185 each contribute to the a divalent metal cation site. Residues 147–196 (HFMGDIHQPLHVSYASDKGGNTIEVHWYTRKANLHHIWDSNIIETAEADL) are substrate binding. Asn211 carries an N-linked (GlcNAc...) asparagine glycan. A propeptide spans 283 to 290 (ATLNRIFG) (removed in mature form).

This sequence belongs to the nuclease type I family. Monomer. Requires Mn(2+) as cofactor. The cofactor is Ca(2+). It depends on Zn(2+) as a cofactor. N-glycosylation is required for enzymatic stability and activity.

It catalyses the reaction Endonucleolytic cleavage to 5'-phosphomononucleotide and 5'-phosphooligonucleotide end-products.. Its activity is regulated as follows. ssDNase activity is inhibited by the divalent cation chelator EDTA and the reducing agent DTT. Divalent metal ions (e.g. Ca(2+), Mg(2+) and Zn(2+)) and DTT represses RNase activity. RNase activity is enhanced by EDTA. Also repressed by vanadate (VO(4)(3-)) and phosphate (PO(4)(3-)) by occupying the active site. Functionally, endonuclease mostly active on RNA and ssDNA, and to a lower extent, on dsDNA. Can cleave mismatch regions in heteroduplex DNA containing single base pair mismatches or insertion/deletion bases. In contradiction with PubMed:22506810, cannot hydrolyze single-stranded DNA and does not cleave mismatches. This chain is Endonuclease 2, found in Arabidopsis thaliana (Mouse-ear cress).